Consider the following 1133-residue polypeptide: Early transcription factor large subunit homolog (1133 aa).

One can recognise a Helicase ATP-binding domain in the interval 52 to 352 (KGGRAFFPCD…PNGQPLQRQQ (301 aa)). 99 to 106 (WQTGTGKS) serves as a coordination point for ATP. The DEAH box motif lies at 281-284 (DEIH). The 201-residue stretch at 524 to 724 (MMKDILSIIR…EGDKALRKHA (201 aa)) folds into the Helicase C-terminal domain.

This sequence belongs to the DEAD box helicase family. DEAH subfamily.

The protein localises to the virion. It carries out the reaction ATP + H2O = ADP + phosphate + H(+). Functionally, putative initation factor. The chain is Early transcription factor large subunit homolog from Ornithodoros (relapsing fever ticks).